A 157-amino-acid chain; its full sequence is Arginine repressor (157 aa).

It belongs to the ArgR family.

It localises to the cytoplasm. It participates in amino-acid biosynthesis; L-arginine biosynthesis [regulation]. Regulates arginine biosynthesis genes. This is Arginine repressor from Deinococcus deserti (strain DSM 17065 / CIP 109153 / LMG 22923 / VCD115).